Here is a 65-residue protein sequence, read N- to C-terminus: Sec-independent protein translocase protein TatA (65 aa).

A helical membrane pass occupies residues 9-29 (ILIIVLLVVVVFGVGKLPQVG). The segment at 40-65 (RKASTGEDAKEEVETKEETKPAEKSE) is disordered. Positions 43–65 (STGEDAKEEVETKEETKPAEKSE) are enriched in basic and acidic residues.

This sequence belongs to the TatA/E family. Forms a complex with TatC.

It is found in the cell membrane. In terms of biological role, part of the twin-arginine translocation (Tat) system that transports large folded proteins containing a characteristic twin-arginine motif in their signal peptide across membranes. TatA could form the protein-conducting channel of the Tat system. In Dehalococcoides mccartyi (strain ATCC BAA-2100 / JCM 16839 / KCTC 5957 / BAV1), this protein is Sec-independent protein translocase protein TatA.